An 856-amino-acid chain; its full sequence is Mechanosensitive ion channel protein 6 (856 aa).

2 disordered regions span residues 45–86 and 116–226; these read GEGN…DPPT and RGLT…PFAA. 2 stretches are compositionally biased toward basic and acidic residues: residues 70–85 and 129–140; these read QQKD…EDPP and TKRDPVGRRDSR. Positions 155-168 are enriched in polar residues; sequence SGNNAPIQRSSSTL. Ser211 bears the Phosphoserine mark. Positions 217–226 are enriched in acidic residues; that stretch reads EEEEDDPFAA. 4 helical membrane-spanning segments follow: residues 242 to 262, 283 to 303, 323 to 343, and 360 to 380; these read IVLE…TLAI, LVLI…VFFI, AVQN…LFDE, and IFVC…LVKV. The residue at position 462 (Ser462) is a Phosphoserine. 2 consecutive transmembrane segments (helical) span residues 615–635 and 651–671; these read MVNI…LGIT and AFIF…LFVI.

It belongs to the MscS (TC 1.A.23) family.

It localises to the membrane. In terms of biological role, mechanosensitive channel that opens in response to stretch forces in the membrane lipid bilayer. This Arabidopsis thaliana (Mouse-ear cress) protein is Mechanosensitive ion channel protein 6 (MSL6).